The following is a 211-amino-acid chain: BAG family molecular chaperone regulator 2 (211 aa).

Ala-2 is modified (N-acetylalanine). A phosphoserine mark is found at Ser-20, Ser-31, and Ser-73. Residues 20 to 61 (SMADRSSRLLESLDQLELRVEALREAATAVEQEKEVLLEMIH) adopt a coiled-coil conformation. Positions 109 to 189 (SLKHATRIID…NIENADKAIK (81 aa)) constitute a BAG domain.

Binds to the ATPase domain of HSP/HSC70 chaperones. May interact with NWD1. Interacts with HSPA1A (via NBD), HSPA1B (via NBD) and HSPA8. May interact with DNJC9; the interaction seems to be histone-dependent.

In terms of biological role, co-chaperone for HSP70 and HSC70 chaperone proteins. Acts as a nucleotide-exchange factor (NEF) promoting the release of ADP from the HSP70 and HSC70 proteins thereby triggering client/substrate protein release. The protein is BAG family molecular chaperone regulator 2 of Bos taurus (Bovine).